Here is a 166-residue protein sequence, read N- to C-terminus: UPF0336 protein MT0525.1 (166 aa).

In terms of domain architecture, MaoC-like spans 8–131 (QTLIGKHYRA…VLAEIRSEVT (124 aa)).

The protein belongs to the UPF0336 family.

This Mycobacterium tuberculosis (strain CDC 1551 / Oshkosh) protein is UPF0336 protein MT0525.1.